The chain runs to 210 residues: MSDPTYYETMYILRPDIPEDEVEGHLKKYSEVLEKAKAKIIDNQMRGKRRLAYTIGKHKEGIYVQLSHTGNGKHVETLERSMRLSEDVIRYLTVKQYGPLPTKRNTKSQDKEASTTNNENDTKEVKEAKDTKEVKEAKDTKEVKEAKDTKEVKEAKDTKEVKEAKDTKEVKEAKDTKEVKEAKDTKEVKEAKDTKEVKEAKDTKEVKEEG.

The tract at residues proline 99 to glycine 210 is disordered. Positions asparagine 120–glycine 210 are enriched in basic and acidic residues.

It belongs to the bacterial ribosomal protein bS6 family.

Functionally, binds together with bS18 to 16S ribosomal RNA. This Prochlorococcus marinus (strain SARG / CCMP1375 / SS120) protein is Small ribosomal subunit protein bS6.